We begin with the raw amino-acid sequence, 192 residues long: Adenylate kinase (192 aa).

12-17 serves as a coordination point for ATP; sequence GSGKTT. The tract at residues 33 to 62 is NMP; that stretch reads STGDLLRAEVAKDSELGKKIDKIISGGNLV. AMP is bound by residues Thr34, Arg39, 60 to 62, 87 to 90, and Gln94; these read NLV and GYPR. The segment at 129–135 is LID; it reads GRARGAD. Arg130 is an ATP binding site. The AMP site is built by Arg132 and Arg144. Arg172 contacts ATP.

This sequence belongs to the adenylate kinase family. In terms of assembly, monomer.

The protein resides in the cytoplasm. The enzyme catalyses AMP + ATP = 2 ADP. The protein operates within purine metabolism; AMP biosynthesis via salvage pathway; AMP from ADP: step 1/1. In terms of biological role, catalyzes the reversible transfer of the terminal phosphate group between ATP and AMP. Plays an important role in cellular energy homeostasis and in adenine nucleotide metabolism. The polypeptide is Adenylate kinase (Campylobacter hominis (strain ATCC BAA-381 / DSM 21671 / CCUG 45161 / LMG 19568 / NCTC 13146 / CH001A)).